The sequence spans 205 residues: Retron Vc95 putative HNH endonuclease (205 aa).

Functionally, putative HNH endonuclease component of antiviral defense system retron Vc95, composed of a non-coding RNA (ncRNA), a reverse transcriptase (RT), a probable ATP-binding protein and this protein. Expression of retron Vc95 confers protection against bacteriophages T2, T4 and T6. At multiplicity of infection (MOI) of 0.02 cultures slow growth when infected with T4 but do not collapse, at MOI 2 cultures enter growth stasis. This chain is Retron Vc95 putative HNH endonuclease, found in Vibrio cholerae serotype O1 biovar El Tor.